Here is a 987-residue protein sequence, read N- to C-terminus: Ephrin type-B receptor 4 (987 aa).

A signal peptide spans 1–15 (MELRALLCWASLATA). Residues 16 to 539 (LEETLLNTKL…ESESWREQLA (524 aa)) are Extracellular-facing. The Eph LBD domain occupies 17–202 (EETLLNTKLE…FYKKCSWLIT (186 aa)). Intrachain disulfides connect Cys61-Cys184 and Cys97-Cys107. N-linked (GlcNAc...) asparagine glycans are attached at residues Asn203, Asn335, and Asn426. Fibronectin type-III domains follow at residues 323 to 432 (PPSA…TDRE) and 436 to 529 (AVSD…TQLD). Residues 540-560 (LIAGTAVVGVVLVLVVVIIAV) form a helical membrane-spanning segment. Over 561–987 (LCLRKQSNGR…GGTGGPAQQF (427 aa)) the chain is Cytoplasmic. The Protein kinase domain maps to 615 to 899 (VKIEEVIGAG…ENGGASHPLL (285 aa)). Residues 621–629 (IGAGEFGEV) and Lys647 contribute to the ATP site. Asp740 serves as the catalytic Proton acceptor. A phosphoserine mark is found at Ser769, Ser770, Ser911, and Ser943. Residues 907 to 971 (SAFGSVGEWL…LASVQHMKSQ (65 aa)) enclose the SAM domain. Positions 965–987 (VQHMKSQAKPGAPGGTGGPAQQF) are disordered. Positions 976 to 987 (APGGTGGPAQQF) are enriched in gly residues. The PDZ-binding motif lies at 985–987 (QQF).

Belongs to the protein kinase superfamily. Tyr protein kinase family. Ephrin receptor subfamily. In terms of assembly, heterotetramer upon binding of the ligand. The heterotetramer is composed of an ephrin dimer and a receptor dimer. Oligomerization is probably required to induce biological responses. Interacts with RASA1; the interaction depends on EPHB4 tyrosine-phosphorylation. Phosphorylated; autophosphorylation is stimulated by EFNB2. Expressed in various organ systems, including lung, liver, kidney, intestine, muscle and heart. Expressed in myogenic progenitor cells.

Its subcellular location is the cell membrane. The enzyme catalyses L-tyrosyl-[protein] + ATP = O-phospho-L-tyrosyl-[protein] + ADP + H(+). Its function is as follows. Receptor tyrosine kinase which binds promiscuously transmembrane ephrin-B family ligands residing on adjacent cells, leading to contact-dependent bidirectional signaling into neighboring cells. The signaling pathway downstream of the receptor is referred to as forward signaling while the signaling pathway downstream of the ephrin ligand is referred to as reverse signaling. Together with its cognate ligand/functional ligand EFNB2 it is involved in the regulation of cell adhesion and migration, and plays a central role in heart morphogenesis, angiogenesis and blood vessel remodeling and permeability. EPHB4-mediated forward signaling controls cellular repulsion and segregation from EFNB2-expressing cells. This Mus musculus (Mouse) protein is Ephrin type-B receptor 4 (Ephb4).